A 100-amino-acid polypeptide reads, in one-letter code: uncharacterized protein (100 aa).

This is an uncharacterized protein from Rhizobium leguminosarum bv. phaseoli.